A 315-amino-acid polypeptide reads, in one-letter code: Phosphomutase-like protein 3 (315 aa).

The signal sequence occupies residues 1-19 (MQQFLTLGALWTLFNVATT). The active-site Tele-phosphohistidine intermediate is the H77. Residues N88 and N154 are each glycosylated (N-linked (GlcNAc...) asparagine). The active-site Proton donor/acceptor is E173. The N-linked (GlcNAc...) asparagine glycan is linked to N185. A lipid anchor (GPI-anchor amidated asparagine) is attached at N286. Residues 287-315 (DAWDTFKDWCPNPPASISGTATSTATGSA) constitute a propeptide, removed in mature form.

It belongs to the phosphoglycerate mutase family.

The protein resides in the cell membrane. This Candida albicans (strain SC5314 / ATCC MYA-2876) (Yeast) protein is Phosphomutase-like protein 3 (PGA12).